The sequence spans 61 residues: UPF0434 protein PFLU_3771 (61 aa).

This sequence belongs to the UPF0434 family.

The chain is UPF0434 protein PFLU_3771 from Pseudomonas fluorescens (strain SBW25).